Consider the following 286-residue polypeptide: Bifunctional protein FolD (286 aa).

NADP(+)-binding positions include 163 to 165 (GMS), Ile188, and Ile229.

It belongs to the tetrahydrofolate dehydrogenase/cyclohydrolase family. Homodimer.

The enzyme catalyses (6R)-5,10-methylene-5,6,7,8-tetrahydrofolate + NADP(+) = (6R)-5,10-methenyltetrahydrofolate + NADPH. It carries out the reaction (6R)-5,10-methenyltetrahydrofolate + H2O = (6R)-10-formyltetrahydrofolate + H(+). It functions in the pathway one-carbon metabolism; tetrahydrofolate interconversion. Its function is as follows. Catalyzes the oxidation of 5,10-methylenetetrahydrofolate to 5,10-methenyltetrahydrofolate and then the hydrolysis of 5,10-methenyltetrahydrofolate to 10-formyltetrahydrofolate. This is Bifunctional protein FolD from Helicobacter hepaticus (strain ATCC 51449 / 3B1).